The sequence spans 619 residues: Zinc finger CCCH domain-containing protein 67 (619 aa).

ANK repeat units lie at residues 52–81 (EPLT…LVDP) and 88–120 (SLST…DPAL). 2 C3H1-type zinc fingers span residues 213-241 (HYSC…HGVF) and 249-273 (QYRT…HTPD). Residues 308 to 341 (SPGSSSFTPPLSPSAGGGGGGGGGSGGGGAWPQQ) are disordered. The span at 322 to 337 (AGGGGGGGGGSGGGGA) shows a compositional bias: gly residues.

The protein is Zinc finger CCCH domain-containing protein 67 of Oryza sativa subsp. japonica (Rice).